The chain runs to 301 residues: Light-independent protochlorophyllide reductase iron-sulfur ATP-binding protein (301 aa).

The segment covering 1–13 (MNVTLRPPLTTAP) has biased composition (low complexity). Positions 1–21 (MNVTLRPPLTTAPRRPDGAGS) are disordered. Residues 45–50 (GIGKST) and Lys-74 contribute to the ATP site. Ser-49 serves as a coordination point for Mg(2+). Positions 130 and 164 each coordinate [4Fe-4S] cluster. Residues 215–216 (NR) and 239–241 (PDL) each bind ATP.

It belongs to the NifH/BchL/ChlL family. Homodimer. Protochlorophyllide reductase is composed of three subunits; BchL, BchN and BchB. [4Fe-4S] cluster serves as cofactor.

It carries out the reaction chlorophyllide a + oxidized 2[4Fe-4S]-[ferredoxin] + 2 ADP + 2 phosphate = protochlorophyllide a + reduced 2[4Fe-4S]-[ferredoxin] + 2 ATP + 2 H2O. The protein operates within porphyrin-containing compound metabolism; bacteriochlorophyll biosynthesis (light-independent). Its function is as follows. Component of the dark-operative protochlorophyllide reductase (DPOR) that uses Mg-ATP and reduced ferredoxin to reduce ring D of protochlorophyllide (Pchlide) to form chlorophyllide a (Chlide). This reaction is light-independent. The L component serves as a unique electron donor to the NB-component of the complex, and binds Mg-ATP. This chain is Light-independent protochlorophyllide reductase iron-sulfur ATP-binding protein, found in Bradyrhizobium sp. (strain BTAi1 / ATCC BAA-1182).